The sequence spans 707 residues: Polyribonucleotide nucleotidyltransferase (707 aa).

The Mg(2+) site is built by Asp491 and Asp497. In terms of domain architecture, KH spans 558-617 (PRIEKIKIHPDKIGLLIGPGGKTIKKISAESGAEITIEDDGTVMIYSSSADSLEAAREMI). Residues 622–695 (GEVTVGGIYR…EKGRYKFSRK (74 aa)) form the S1 motif domain.

It belongs to the polyribonucleotide nucleotidyltransferase family. Mg(2+) serves as cofactor.

Its subcellular location is the cytoplasm. It carries out the reaction RNA(n+1) + phosphate = RNA(n) + a ribonucleoside 5'-diphosphate. Involved in mRNA degradation. Catalyzes the phosphorolysis of single-stranded polyribonucleotides processively in the 3'- to 5'-direction. The chain is Polyribonucleotide nucleotidyltransferase from Methylacidiphilum infernorum (isolate V4) (Methylokorus infernorum (strain V4)).